Here is a 498-residue protein sequence, read N- to C-terminus: ATP synthase subunit beta, chloroplastic (498 aa).

Residue 172–179 coordinates ATP; sequence GGAGVGKT.

The protein belongs to the ATPase alpha/beta chains family. In terms of assembly, F-type ATPases have 2 components, CF(1) - the catalytic core - and CF(0) - the membrane proton channel. CF(1) has five subunits: alpha(3), beta(3), gamma(1), delta(1), epsilon(1). CF(0) has four main subunits: a(1), b(1), b'(1) and c(9-12).

It is found in the plastid. It localises to the chloroplast thylakoid membrane. The enzyme catalyses ATP + H2O + 4 H(+)(in) = ADP + phosphate + 5 H(+)(out). Its function is as follows. Produces ATP from ADP in the presence of a proton gradient across the membrane. The catalytic sites are hosted primarily by the beta subunits. In Helianthus annuus (Common sunflower), this protein is ATP synthase subunit beta, chloroplastic.